A 133-amino-acid polypeptide reads, in one-letter code: Large-conductance mechanosensitive channel (133 aa).

2 consecutive transmembrane segments (helical) span residues 14–34 (VVDLAVAVVIGAAFGTVVTTL) and 73–93 (FITVLLNFVIIAAAIYFMVVV).

The protein belongs to the MscL family. Homopentamer.

The protein localises to the cell membrane. Its function is as follows. Channel that opens in response to stretch forces in the membrane lipid bilayer. May participate in the regulation of osmotic pressure changes within the cell. The chain is Large-conductance mechanosensitive channel from Renibacterium salmoninarum (strain ATCC 33209 / DSM 20767 / JCM 11484 / NBRC 15589 / NCIMB 2235).